A 179-amino-acid chain; its full sequence is Large ribosomal subunit protein uL5 (179 aa).

Belongs to the universal ribosomal protein uL5 family. As to quaternary structure, part of the 50S ribosomal subunit; part of the 5S rRNA/L5/L18/L25 subcomplex. Contacts the 5S rRNA and the P site tRNA. Forms a bridge to the 30S subunit in the 70S ribosome.

This is one of the proteins that bind and probably mediate the attachment of the 5S RNA into the large ribosomal subunit, where it forms part of the central protuberance. In the 70S ribosome it contacts protein S13 of the 30S subunit (bridge B1b), connecting the 2 subunits; this bridge is implicated in subunit movement. Contacts the P site tRNA; the 5S rRNA and some of its associated proteins might help stabilize positioning of ribosome-bound tRNAs. The polypeptide is Large ribosomal subunit protein uL5 (Pseudomonas putida (strain ATCC 700007 / DSM 6899 / JCM 31910 / BCRC 17059 / LMG 24140 / F1)).